A 310-amino-acid chain; its full sequence is Pseudouridine-5'-phosphate glycosidase (310 aa).

The active-site Proton donor is Glu26. Residues Lys87 and Val107 each contribute to the substrate site. Asp139 serves as a coordination point for Mn(2+). A substrate-binding site is contributed by 141 to 143 (SAD). The Nucleophile role is filled by Lys160.

It belongs to the pseudouridine-5'-phosphate glycosidase family. In terms of assembly, homotrimer. Mn(2+) is required as a cofactor.

It carries out the reaction D-ribose 5-phosphate + uracil = psi-UMP + H2O. Catalyzes the reversible cleavage of pseudouridine 5'-phosphate (PsiMP) to ribose 5-phosphate and uracil. Functions biologically in the cleavage direction, as part of a pseudouridine degradation pathway. The chain is Pseudouridine-5'-phosphate glycosidase from Roseobacter denitrificans (strain ATCC 33942 / OCh 114) (Erythrobacter sp. (strain OCh 114)).